A 1108-amino-acid chain; its full sequence is MSAWLLPAGGFPGAGFCIPAWQSRSSLSRVLRWPGPGLPGLLLLLLLPSPSAFSAVFKVGVLGPWACDPIFARARPDLAARLATDRLNRDLALDGGPWFEVTLLPEPCLTPGSLGAVSSALTRVSGLVGPVNPAACRPAELLAQEAGVALVPWGCPGTRAAGTTAPAVTPAADALYVLLKAFRWARVALITAPQDLWVEAGRALSTALRARGLPVALVTSMVPSDLSGAREALRRIRDGPRVRVVIMVMHSVLLGGEEQRYLLEAAEELGLTDGSLVFLPFDTLHYALSPGPEALAAFVNSSKLRRAHDAVLTLTRRCPPGGSVQDSLRRAQEHQELPLDLDLKQVSPLFGTIYDAVFLLAGGVTRARAAVGGGWVSGASVARQMREAQVFGFCGILGRTEEPSFVLLDTDAAGERLFTTHLLDPVLGSLRSAGTPVHFPRGAPAPGPDPSCWFDPDVICNGGVEPGLVFVGFLLVIVVGLTGAFLAHYLRHRLLHMQMVSGPNKIILTLEDVTFLHPQGGSSRKVAQGSRSSLATRSTSDIRSVPSQPQESTNIGLYEGDWVWLKKFPGEHHMAIRPATKMAFSKLRELRHENVALYLGLFLAGTADSPATPGEGILAVVSEHCARGSLHDLLAQRDIKLDWMFKSSLLLDLIKGMRYLHHRGVAHGRLKSRNCVVDGRFVLKVTDHGHGRLLEAQRVLPEPPSAEDQLWTAPELLRDPALERRGTLAGDVFSLGIIMQEVVCRSTPYAMLELTPEEVIQRVRSPPPLCRPLVSMDQAPMECIQLMAQCWAEHPELRPSMDLTFDLFKGINKGRKTNIIDSMLRMLEQYSSNLEDLIRERTEELEQEKQKTDRLLTQMLPPSVAEALKMGTSVEPEYFEEVTLYFSDIVGFTTISAMSEPIEVVDLLNDLYTLFDAIIGSHDVYKVETIGDAYMVASGLPQRNGQRHAAEIANMSLDILSAVGSFRMRHMPEVPVRIRIGLHSGPCVAGVVGLTMPRYCLFGDTVNTASRMESTGLPYRIHVNMSTVRILRALDQGFQMECRGRTELKGKGVEDTYWLVGRVGFNKPIPKPPDLQPGASNHGISLQEIPPERRKKLEKARPGQFTGK.

Residues 1–54 (MSAWLLPAGGFPGAGFCIPAWQSRSSLSRVLRWPGPGLPGLLLLLLLPSPSAFS) form the signal peptide. Topologically, residues 55-465 (AVFKVGVLGP…PDVICNGGVE (411 aa)) are extracellular. Cysteine 108 and cysteine 136 form a disulfide bridge. Asparagine 300 carries an N-linked (GlcNAc...) asparagine glycan. A helical transmembrane segment spans residues 466–490 (PGLVFVGFLLVIVVGLTGAFLAHYL). At 491 to 1108 (RHRLLHMQMV…KARPGQFTGK (618 aa)) the chain is on the cytoplasmic side. Positions 520-552 (GGSSRKVAQGSRSSLATRSTSDIRSVPSQPQES) are disordered. The 292-residue stretch at 520-811 (GGSSRKVAQG…DLTFDLFKGI (292 aa)) folds into the Protein kinase domain. Residues 529-552 (GSRSSLATRSTSDIRSVPSQPQES) are compositionally biased toward polar residues. In terms of domain architecture, Guanylate cyclase spans 883–1013 (TLYFSDIVGF…DTVNTASRME (131 aa)). The disordered stretch occupies residues 1069–1108 (IPKPPDLQPGASNHGISLQEIPPERRKKLEKARPGQFTGK).

It belongs to the adenylyl cyclase class-4/guanylyl cyclase family. Homodimer; requires homodimerization for guanylyl cyclase activity. Interacts (via C-terminus) with RD3 (via C-terminus); promotes the exit of GUCY2E from the endoplasmic reticulum and its trafficking to the photoreceptor outer segments. Interaction with RD3 negatively regulates GUCY2E guanylate cyclase activity. Post-translationally, there are 9 conserved cysteine residues in sensory guanylate cyclases, 6 in the extracellular domain, which may be involved in intra- or interchain disulfide bonds. As to expression, expressed in retina and enriched in photoreceptor outer segments.

The protein localises to the membrane. The protein resides in the photoreceptor outer segment membrane. It localises to the endoplasmic reticulum membrane. It carries out the reaction GTP = 3',5'-cyclic GMP + diphosphate. Its activity is regulated as follows. Activated by GUCA1A when free calcium ions concentration is low, and inhibited by GUCA1A when free calcium ions concentration is high. Negatively regulated by RD3; inhibits the basal and GUCA1A-stimulated guanylate cyclase activity. Functionally, catalyzes the synthesis of cyclic GMP (cGMP) in rods and cones of photoreceptors. Plays an essential role in phototransduction, by mediating cGMP replenishment. May also participate in the trafficking of membrane-asociated proteins to the photoreceptor outer segment membrane. In Rattus norvegicus (Rat), this protein is Retinal guanylyl cyclase 1 (Gucy2e).